Here is a 418-residue protein sequence, read N- to C-terminus: UDP-N-acetylglucosamine 1-carboxyvinyltransferase (418 aa).

Residue 22–23 (KN) coordinates phosphoenolpyruvate. Arginine 91 contributes to the UDP-N-acetyl-alpha-D-glucosamine binding site. Residue cysteine 115 is the Proton donor of the active site. Position 115 is a 2-(S-cysteinyl)pyruvic acid O-phosphothioketal (cysteine 115). Residues 120–124 (RPVDL), 160–163 (KVSV), aspartate 305, and isoleucine 327 each bind UDP-N-acetyl-alpha-D-glucosamine.

The protein belongs to the EPSP synthase family. MurA subfamily.

The protein resides in the cytoplasm. It catalyses the reaction phosphoenolpyruvate + UDP-N-acetyl-alpha-D-glucosamine = UDP-N-acetyl-3-O-(1-carboxyvinyl)-alpha-D-glucosamine + phosphate. It functions in the pathway cell wall biogenesis; peptidoglycan biosynthesis. Cell wall formation. Adds enolpyruvyl to UDP-N-acetylglucosamine. In Baumannia cicadellinicola subsp. Homalodisca coagulata, this protein is UDP-N-acetylglucosamine 1-carboxyvinyltransferase.